We begin with the raw amino-acid sequence, 365 residues long: tRNA-specific 2-thiouridylase MnmA (365 aa).

Residues 6 to 13 (AMSGGVDS) and L32 contribute to the ATP site. C101 serves as the catalytic Nucleophile. A disulfide bond links C101 and C199. Residue G125 coordinates ATP. Positions 149–151 (KDQ) are interaction with tRNA. C199 serves as the catalytic Cysteine persulfide intermediate.

This sequence belongs to the MnmA/TRMU family.

The protein localises to the cytoplasm. It catalyses the reaction S-sulfanyl-L-cysteinyl-[protein] + uridine(34) in tRNA + AH2 + ATP = 2-thiouridine(34) in tRNA + L-cysteinyl-[protein] + A + AMP + diphosphate + H(+). In terms of biological role, catalyzes the 2-thiolation of uridine at the wobble position (U34) of tRNA, leading to the formation of s(2)U34. In Corynebacterium efficiens (strain DSM 44549 / YS-314 / AJ 12310 / JCM 11189 / NBRC 100395), this protein is tRNA-specific 2-thiouridylase MnmA.